Reading from the N-terminus, the 228-residue chain is Cytidylate kinase (228 aa).

Residue 12-20 participates in ATP binding; that stretch reads GPSGAGKGT.

Belongs to the cytidylate kinase family. Type 1 subfamily.

The protein resides in the cytoplasm. It carries out the reaction CMP + ATP = CDP + ADP. The enzyme catalyses dCMP + ATP = dCDP + ADP. The chain is Cytidylate kinase from Photobacterium profundum (strain SS9).